The sequence spans 293 residues: Vibriobactin-specific isochorismatase (293 aa).

The Carrier domain occupies 211–287 (KLTGLSLRTM…QWWQTIQANL (77 aa)). Residue S248 is modified to O-(pantetheine 4'-phosphoryl)serine.

This sequence belongs to the isochorismatase family. It depends on pantetheine 4'-phosphate as a cofactor.

It carries out the reaction isochorismate + H2O = (2S,3S)-2,3-dihydroxy-2,3-dihydrobenzoate + pyruvate. It functions in the pathway siderophore biosynthesis; vibriobactin biosynthesis. Its function is as follows. Involved in the biosynthesis of the catechol siderophore vibriobactin. Vibriobactin is a chelating compound involved in transporting iron from the bacterial environment into the cell cytoplasm. The chain is Vibriobactin-specific isochorismatase (vibB) from Vibrio cholerae serotype O1 (strain ATCC 39541 / Classical Ogawa 395 / O395).